Consider the following 276-residue polypeptide: uncharacterized protein (276 aa).

The tract at residues Met-1–Asn-70 is disordered. Residues Val-21 to His-35 show a composition bias toward basic and acidic residues. One can recognise an RRM domain in the interval Gly-105–Glu-183. The tract at residues Val-249 to Lys-276 is disordered. Low complexity predominate over residues Pro-252–Lys-261. The span at Lys-262–Lys-276 shows a compositional bias: basic residues.

The protein resides in the nucleus. It is found in the nucleolus. This is an uncharacterized protein from Schizosaccharomyces pombe (strain 972 / ATCC 24843) (Fission yeast).